The primary structure comprises 1273 residues: Ribulose bisphosphate carboxylase small subunit, chloroplastic (1273 aa).

The transit peptide at 1 to 134 directs the protein to the chloroplast; that stretch reads MPFDRQPLLS…AVLPFTSEKD (134 aa). 7 consecutive propeptides follow at residues 269–278, 412–421, 556–565, 699–708, 844–853, 987–996, and 1131–1140; these read GMAAMTGEKD and GMAAMTGEKE.

It belongs to the RuBisCO small chain family. As to quaternary structure, heterohexadecamer of 8 large and 8 small subunits. In terms of processing, eight small subunits are processed from a large polyprotein. All start with the same sequence but there is more heterogeneity at the C-terminus.

It is found in the plastid. The protein localises to the chloroplast. Its function is as follows. RuBisCO catalyzes two reactions: the carboxylation of D-ribulose 1,5-bisphosphate, the primary event in carbon dioxide fixation, as well as the oxidative fragmentation of the pentose substrate. Both reactions occur simultaneously and in competition at the same active site. Although the small subunit is not catalytic it is essential for maximal activity. This chain is Ribulose bisphosphate carboxylase small subunit, chloroplastic, found in Euglena gracilis.